The sequence spans 514 residues: Serine--tRNA ligase, cytoplasmic (514 aa).

Met1 bears the N-acetylmethionine mark. Positions 9–61 (RVDKGGDPALIRESQEKRFKDPGLVDQLVKADSEWRRCRFRADNLNKLKNLCS) are interaction with tRNA. Ser241 bears the Phosphoserine mark. L-serine contacts are provided by Thr271 and Arg302. ATP contacts are provided by residues 302–304 (RQE) and 318–321 (VHQF). Position 323 is an N6-acetyllysine (Lys323). Glu325 lines the L-serine pocket. 391–394 (ELVS) serves as a coordination point for ATP. Asn427 contacts L-serine. The segment at 475 to 514 (PIDQEPSKKQKKQHEGSKKKGAARDVALESQLQNMEVTDA) is disordered. The segment covering 479–501 (EPSKKQKKQHEGSKKKGAARDVA) has biased composition (basic and acidic residues). The Nuclear localization signal signature appears at 482–494 (KKQKKQHEGSKKK). Positions 504–514 (SQLQNMEVTDA) are enriched in polar residues.

This sequence belongs to the class-II aminoacyl-tRNA synthetase family. Type-1 seryl-tRNA synthetase subfamily. As to quaternary structure, homodimer. The tRNA molecule may bind across the dimer. Interacts with SIRT2. Interacts with METTL6; interaction is required for the tRNA N(3)-methylcytidine methyltransferase activity of METTL6.

Its subcellular location is the cytoplasm. It is found in the nucleus. It catalyses the reaction tRNA(Ser) + L-serine + ATP = L-seryl-tRNA(Ser) + AMP + diphosphate + H(+). The catalysed reaction is tRNA(Sec) + L-serine + ATP = L-seryl-tRNA(Sec) + AMP + diphosphate + H(+). The protein operates within aminoacyl-tRNA biosynthesis; selenocysteinyl-tRNA(Sec) biosynthesis; L-seryl-tRNA(Sec) from L-serine and tRNA(Sec): step 1/1. Its function is as follows. Catalyzes the attachment of serine to tRNA(Ser) in a two-step reaction: serine is first activated by ATP to form Ser-AMP and then transferred to the acceptor end of tRNA(Ser). Is probably also able to aminoacylate tRNA(Sec) with serine, to form the misacylated tRNA L-seryl-tRNA(Sec), which will be further converted into selenocysteinyl-tRNA(Sec). In the nucleus, binds to the VEGFA core promoter and prevents MYC binding and transcriptional activation by MYC. Recruits SIRT2 to the VEGFA promoter, promoting deacetylation of histone H4 at 'Lys-16' (H4K16). Thereby, inhibits the production of VEGFA and sprouting angiogenesis mediated by VEGFA. This is Serine--tRNA ligase, cytoplasmic (SARS1) from Bos taurus (Bovine).